A 1225-amino-acid polypeptide reads, in one-letter code: Cohesin subunit SA-3 (1225 aa).

Residues Met1 to Ala97 form a disordered region. Residues Ala15–Leu26 show a composition bias toward low complexity. The segment covering Leu45–Asp54 has biased composition (acidic residues). 2 stretches are compositionally biased toward basic residues: residues Asn59–Pro69 and Lys76–Arg90. Residues Phe309–Met394 form the SCD domain. 3 disordered regions span residues Ser546 to Lys567, Ala1063 to Val1113, and Glu1177 to Phe1225. The segment covering Val1078 to Val1089 has biased composition (basic and acidic residues). A compositionally biased stretch (low complexity) spans Ser1090 to Leu1099. Positions Glu1177 to Asn1191 are enriched in acidic residues. Polar residues predominate over residues Asp1198 to Glu1209. A Phosphoserine modification is found at Ser1203. Positions Asp1216–Phe1225 are enriched in acidic residues.

Belongs to the SCC3 family. In terms of assembly, component of the meiosis-specific cohesin complex, which also contains the SMC1 (SMC1A or SMC1B) and SMC3 heterodimer. Such complex likely contains RAD21, or the meiosis-specific related protein REC8. Interacts with CCDC79/TERB1; recruiting cohesin to telomeres to develop structural rigidity. In terms of processing, phosphorylated. Testis specific.

Its subcellular location is the nucleus. It is found in the chromosome. The protein localises to the centromere. Its function is as follows. Meiosis specific component of cohesin complex. The cohesin complex is required for the cohesion of sister chromatids after DNA replication. The cohesin complex apparently forms a large proteinaceous ring within which sister chromatids can be trapped. At anaphase, the complex is cleaved and dissociates from chromatin, allowing sister chromatids to segregate. The meiosis-specific cohesin complex probably replaces mitosis specific cohesin complex when it dissociates from chromatin during prophase I. The protein is Cohesin subunit SA-3 (STAG3) of Homo sapiens (Human).